A 209-amino-acid chain; its full sequence is Casparian strip membrane protein 1 (209 aa).

Residues 1–46 (MEKSESTKIDVVETNKERKGKAPLLGKAPVVAAAVVHAKGGGAKRG) are Cytoplasmic-facing. The chain crosses the membrane as a helical span at residues 47–67 (IAIFDLILRIAAFASALGAAV). Residues 68–96 (AMATTEETLPFFTQFFQFEASYDDLPTFT) are Extracellular-facing. Residues 97–117 (FFVVAMAIVVAYLVLSVPFSI) form a helical membrane-spanning segment. Over 118-129 (VCIVRPHAVVPR) the chain is Cytoplasmic. Residues 130–150 (LLLIIFDTVIIALTTGAAGSS) form a helical membrane-spanning segment. Topologically, residues 151 to 179 (AAIVYLAHNGNQDANWLAICQQFGDFCQR) are extracellular. The chain crosses the membrane as a helical span at residues 180-200 (VSGAVVAAFVTVVILIFLVVL). The Cytoplasmic segment spans residues 201-209 (SASALRRHH).

Belongs to the Casparian strip membrane proteins (CASP) family. As to quaternary structure, homodimer and heterodimers.

It localises to the cell membrane. Its function is as follows. Regulates membrane-cell wall junctions and localized cell wall deposition. Required for establishment of the Casparian strip membrane domain (CSD) and the subsequent formation of Casparian strips, a cell wall modification of the root endodermis that determines an apoplastic barrier between the intraorganismal apoplasm and the extraorganismal apoplasm and prevents lateral diffusion. The protein is Casparian strip membrane protein 1 of Nicotiana tabacum (Common tobacco).